The following is a 375-amino-acid chain: MVSLYLENGLFLQAQSFGASGTQVGELVFNTSMSGYQEVISDPSYKGQFVVFSMPEIGVVGANPKDDESFFSCAGVLARHYNEFFSNSRADSSLSTYLKKRGVLGISGVDTRSLIKTLRHHGCLMMIASTIEHDRNKLEEVLKNAPKISHSPLVSSVSTPKIITHQRATFDFNTLDYKPFDEKIPHKIIAVLDFGAKGNILNELQNVGLKALIYPHHTKANELIKAYEKKEISGIFLSNGPGDPLSLQQEIGEIKRLINAKIPMFGICLGHQLLSIAQGYPTYKLKFGHHGSNHPVKNLETNAVEITAQNHNYCVPEEIEEIATITHRNLFDNTIEGVRYKNAPIISVQHHPESSPGPKESHYIFKEFVGLLEGF.

The CPSase stretch occupies residues Met1–Ile184. Ser44, Gly240, and Gly242 together coordinate L-glutamine. Positions Ile188 to Phe375 constitute a Glutamine amidotransferase type-1 domain. The active-site Nucleophile is Cys268. Residues Leu269, Gln272, Asn310, and Tyr313 each contribute to the L-glutamine site. Active-site residues include His351 and Glu353.

The protein belongs to the CarA family. As to quaternary structure, composed of two chains; the small (or glutamine) chain promotes the hydrolysis of glutamine to ammonia, which is used by the large (or ammonia) chain to synthesize carbamoyl phosphate. Tetramer of heterodimers (alpha,beta)4.

The catalysed reaction is hydrogencarbonate + L-glutamine + 2 ATP + H2O = carbamoyl phosphate + L-glutamate + 2 ADP + phosphate + 2 H(+). The enzyme catalyses L-glutamine + H2O = L-glutamate + NH4(+). It participates in amino-acid biosynthesis; L-arginine biosynthesis; carbamoyl phosphate from bicarbonate: step 1/1. The protein operates within pyrimidine metabolism; UMP biosynthesis via de novo pathway; (S)-dihydroorotate from bicarbonate: step 1/3. Functionally, small subunit of the glutamine-dependent carbamoyl phosphate synthetase (CPSase). CPSase catalyzes the formation of carbamoyl phosphate from the ammonia moiety of glutamine, carbonate, and phosphate donated by ATP, constituting the first step of 2 biosynthetic pathways, one leading to arginine and/or urea and the other to pyrimidine nucleotides. The small subunit (glutamine amidotransferase) binds and cleaves glutamine to supply the large subunit with the substrate ammonia. This is Carbamoyl phosphate synthase small chain from Helicobacter pylori (strain J99 / ATCC 700824) (Campylobacter pylori J99).